The chain runs to 330 residues: Ketol-acid reductoisomerase (NADP(+)) (330 aa).

Positions 3 to 184 (LPVYYDKDID…GGGRMGVLKT (182 aa)) constitute a KARI N-terminal Rossmann domain. Residues 26-29 (YGAQ), serine 52, and serine 54 each bind NADP(+). Residue histidine 109 is part of the active site. Glycine 135 contacts NADP(+). The 145-residue stretch at 185–329 (SFKEECESDL…EILRAPFNHK (145 aa)) folds into the KARI C-terminal knotted domain. Aspartate 193, glutamate 197, glutamate 229, and glutamate 233 together coordinate Mg(2+). Residue serine 254 participates in substrate binding.

This sequence belongs to the ketol-acid reductoisomerase family. It depends on Mg(2+) as a cofactor.

The catalysed reaction is (2R)-2,3-dihydroxy-3-methylbutanoate + NADP(+) = (2S)-2-acetolactate + NADPH + H(+). It catalyses the reaction (2R,3R)-2,3-dihydroxy-3-methylpentanoate + NADP(+) = (S)-2-ethyl-2-hydroxy-3-oxobutanoate + NADPH + H(+). It participates in amino-acid biosynthesis; L-isoleucine biosynthesis; L-isoleucine from 2-oxobutanoate: step 2/4. It functions in the pathway amino-acid biosynthesis; L-valine biosynthesis; L-valine from pyruvate: step 2/4. Involved in the biosynthesis of branched-chain amino acids (BCAA). Catalyzes an alkyl-migration followed by a ketol-acid reduction of (S)-2-acetolactate (S2AL) to yield (R)-2,3-dihydroxy-isovalerate. In the isomerase reaction, S2AL is rearranged via a Mg-dependent methyl migration to produce 3-hydroxy-3-methyl-2-ketobutyrate (HMKB). In the reductase reaction, this 2-ketoacid undergoes a metal-dependent reduction by NADPH to yield (R)-2,3-dihydroxy-isovalerate. This chain is Ketol-acid reductoisomerase (NADP(+)), found in Helicobacter pylori (strain HPAG1).